The primary structure comprises 299 residues: ATP phosphoribosyltransferase (299 aa).

It belongs to the ATP phosphoribosyltransferase family. Long subfamily. Requires Mg(2+) as cofactor.

The protein localises to the cytoplasm. The catalysed reaction is 1-(5-phospho-beta-D-ribosyl)-ATP + diphosphate = 5-phospho-alpha-D-ribose 1-diphosphate + ATP. It participates in amino-acid biosynthesis; L-histidine biosynthesis; L-histidine from 5-phospho-alpha-D-ribose 1-diphosphate: step 1/9. Its activity is regulated as follows. Feedback inhibited by histidine. In terms of biological role, catalyzes the condensation of ATP and 5-phosphoribose 1-diphosphate to form N'-(5'-phosphoribosyl)-ATP (PR-ATP). Has a crucial role in the pathway because the rate of histidine biosynthesis seems to be controlled primarily by regulation of HisG enzymatic activity. This chain is ATP phosphoribosyltransferase, found in Campylobacter jejuni subsp. doylei (strain ATCC BAA-1458 / RM4099 / 269.97).